We begin with the raw amino-acid sequence, 123 residues long: uncharacterized protein (123 aa).

Transmembrane regions (helical) follow at residues Met-1–Cys-21 and Leu-103–Phe-123.

It localises to the membrane. This is an uncharacterized protein from Saccharomyces cerevisiae (strain ATCC 204508 / S288c) (Baker's yeast).